A 215-amino-acid chain; its full sequence is Peptide methionine sulfoxide reductase MsrA (215 aa).

C58 is a catalytic residue.

Belongs to the MsrA Met sulfoxide reductase family.

The enzyme catalyses L-methionyl-[protein] + [thioredoxin]-disulfide + H2O = L-methionyl-(S)-S-oxide-[protein] + [thioredoxin]-dithiol. It carries out the reaction [thioredoxin]-disulfide + L-methionine + H2O = L-methionine (S)-S-oxide + [thioredoxin]-dithiol. Its function is as follows. Has an important function as a repair enzyme for proteins that have been inactivated by oxidation. Catalyzes the reversible oxidation-reduction of methionine sulfoxide in proteins to methionine. The protein is Peptide methionine sulfoxide reductase MsrA of Pseudomonas syringae pv. tomato (strain ATCC BAA-871 / DC3000).